A 340-amino-acid polypeptide reads, in one-letter code: Terpene synthase 29 (340 aa).

Residues Asp-132, Glu-197, Asn-257, Ser-261, and Glu-265 each contribute to the Mg(2+) site. The DDXXXXD motif signature appears at 132-138 (DEPDILE). An NSE/DTE motif motif is present at residues 257-265 (NDILSFYKE).

Belongs to the trichodiene synthase family. The cofactor is Mg(2+).

In terms of biological role, terpene cyclase that catalyzes the cyclization of farnesyl diphosphate (FPP) to a single major terpene scaffold whose chemical structure is still unknown. This chain is Terpene synthase 29, found in Postia placenta (strain ATCC 44394 / Madison 698-R) (Brown rot fungus).